The chain runs to 463 residues: Ribosomal protein uS12 methylthiotransferase RimO (463 aa).

The region spanning 15 to 130 (PKVGMVSLGC…VMQAVHSHLP (116 aa)) is the MTTase N-terminal domain. 6 residues coordinate [4Fe-4S] cluster: Cys24, Cys60, Cys89, Cys161, Cys165, and Cys168. Positions 147–392 (LTPRHYAYLK…MEVAEEVSAA (246 aa)) constitute a Radical SAM core domain. Residues 395–463 (ARKIGKTLKV…ADSHDLWGEV (69 aa)) form the TRAM domain.

Belongs to the methylthiotransferase family. RimO subfamily. It depends on [4Fe-4S] cluster as a cofactor.

It is found in the cytoplasm. It catalyses the reaction L-aspartate(89)-[ribosomal protein uS12]-hydrogen + (sulfur carrier)-SH + AH2 + 2 S-adenosyl-L-methionine = 3-methylsulfanyl-L-aspartate(89)-[ribosomal protein uS12]-hydrogen + (sulfur carrier)-H + 5'-deoxyadenosine + L-methionine + A + S-adenosyl-L-homocysteine + 2 H(+). In terms of biological role, catalyzes the methylthiolation of an aspartic acid residue of ribosomal protein uS12. The sequence is that of Ribosomal protein uS12 methylthiotransferase RimO from Burkholderia pseudomallei (strain 668).